A 1374-amino-acid chain; its full sequence is DNA-directed RNA polymerase subunit beta (1374 aa).

The protein belongs to the RNA polymerase beta chain family. The RNAP catalytic core consists of 2 alpha, 1 beta, 1 beta' and 1 omega subunit. When a sigma factor is associated with the core the holoenzyme is formed, which can initiate transcription.

The enzyme catalyses RNA(n) + a ribonucleoside 5'-triphosphate = RNA(n+1) + diphosphate. Functionally, DNA-dependent RNA polymerase catalyzes the transcription of DNA into RNA using the four ribonucleoside triphosphates as substrates. In Rickettsia prowazekii (strain Madrid E), this protein is DNA-directed RNA polymerase subunit beta.